We begin with the raw amino-acid sequence, 154 residues long: 6,7-dimethyl-8-ribityllumazine synthase (154 aa).

Residues F22, 56–58, and 81–83 each bind 5-amino-6-(D-ribitylamino)uracil; these read AFE and VLI. Residue 86–87 participates in (2S)-2-hydroxy-3-oxobutyl phosphate binding; it reads ET. H89 serves as the catalytic Proton donor. 5-amino-6-(D-ribitylamino)uracil is bound at residue L114. R128 serves as a coordination point for (2S)-2-hydroxy-3-oxobutyl phosphate.

The protein belongs to the DMRL synthase family.

It catalyses the reaction (2S)-2-hydroxy-3-oxobutyl phosphate + 5-amino-6-(D-ribitylamino)uracil = 6,7-dimethyl-8-(1-D-ribityl)lumazine + phosphate + 2 H2O + H(+). It participates in cofactor biosynthesis; riboflavin biosynthesis; riboflavin from 2-hydroxy-3-oxobutyl phosphate and 5-amino-6-(D-ribitylamino)uracil: step 1/2. In terms of biological role, catalyzes the formation of 6,7-dimethyl-8-ribityllumazine by condensation of 5-amino-6-(D-ribitylamino)uracil with 3,4-dihydroxy-2-butanone 4-phosphate. This is the penultimate step in the biosynthesis of riboflavin. This Chlamydia pneumoniae (Chlamydophila pneumoniae) protein is 6,7-dimethyl-8-ribityllumazine synthase.